The chain runs to 157 residues: UPF0251 protein CLD_3165 (157 aa).

Belongs to the UPF0251 family.

The sequence is that of UPF0251 protein CLD_3165 from Clostridium botulinum (strain Okra / Type B1).